A 348-amino-acid polypeptide reads, in one-letter code: Erythronate-4-phosphate dehydrogenase (348 aa).

2 residues coordinate substrate: threonine 46 and threonine 67. Aspartate 147 provides a ligand contact to NAD(+). Arginine 209 is a catalytic residue. Position 233 (aspartate 233) interacts with NAD(+). Glutamate 238 is a catalytic residue. The active-site Proton donor is histidine 255. Position 258 (glycine 258) interacts with NAD(+). Tyrosine 259 is a binding site for substrate.

The protein belongs to the D-isomer specific 2-hydroxyacid dehydrogenase family. PdxB subfamily. In terms of assembly, homodimer.

It is found in the cytoplasm. The enzyme catalyses 4-phospho-D-erythronate + NAD(+) = (R)-3-hydroxy-2-oxo-4-phosphooxybutanoate + NADH + H(+). The protein operates within cofactor biosynthesis; pyridoxine 5'-phosphate biosynthesis; pyridoxine 5'-phosphate from D-erythrose 4-phosphate: step 2/5. Catalyzes the oxidation of erythronate-4-phosphate to 3-hydroxy-2-oxo-4-phosphonooxybutanoate. This chain is Erythronate-4-phosphate dehydrogenase, found in Bacteroides fragilis (strain ATCC 25285 / DSM 2151 / CCUG 4856 / JCM 11019 / LMG 10263 / NCTC 9343 / Onslow / VPI 2553 / EN-2).